The chain runs to 674 residues: Kinesin-like protein KIFC1 (674 aa).

A phosphoserine mark is found at Ser-28, Ser-33, and Ser-35. Positions 66–96 are disordered; that stretch reads TSRPRGPLLSTVSQTQGHTAAQKGPKKTGPR. Over residues 75–84 the composition is skewed to polar residues; the sequence is STVSQTQGHT. The stretch at 146–315 forms a coiled coil; the sequence is DLNEELKRYR…QELKGNIRVF (170 aa). In terms of domain architecture, Kinesin motor spans 311–664; sequence NIRVFCRVRP…LRFASKVNQC (354 aa). A disordered region spans residues 327-366; that stretch reads TPSPGFLVFPPGPAGPSDPPTGLSLSRSDDRRSTLTGAPA. The span at 336–345 shows a compositional bias: pro residues; it reads PPGPAGPSDP. The residue at position 360 (Thr-360) is a Phosphothreonine. 411–418 provides a ligand contact to ATP; the sequence is GQTGSGKT.

The protein belongs to the TRAFAC class myosin-kinesin ATPase superfamily. Kinesin family. NCD subfamily. Binds NUBP1 and NUBP2. Interacts with PPP1R42. As to expression, highly expressed in 14 dpc embryos, spleen and NIH3T3 cells. Also expressed in testis, brain, lung, kidney and cultured astrocytes. Very low levels in skeletal muscle and heart.

It is found in the nucleus. Its subcellular location is the cytoplasm. The protein localises to the cytoskeleton. The protein resides in the microtubule organizing center. It localises to the centrosome. It is found in the spindle. Its subcellular location is the early endosome. In terms of biological role, minus end-directed microtubule-dependent motor required for bipolar spindle formation. May contribute to movement of early endocytic vesicles. Regulates cilium formation and structure. This Mus musculus (Mouse) protein is Kinesin-like protein KIFC1.